Reading from the N-terminus, the 313-residue chain is MLDNVLKIATRQSPLALWQAHYVKDALMATHPGLTVELVPMVTRGDVILDTPLAKVGGKGLFVKELEIALLEKRADIAVHSMKDVPVAFPDGLGLVTICEREDPRDAFVSNQYHSLDDLPAGSIVGTSSLRRQCQLAERRPDLIIRSLRGNVGTRLGKLDNGDYDAIILAVAGLKRLGLASRIRTALPPEVSLPAVGQGAIGIECRLDDARTHALLAPLNHPQTALRVTAERAMNTRLEGGCQVPIGSYAEIFNGEIWLRALVGAPDGSVMVRGERRGSPEQAEQMGISLAEELLENGARAILTAVYNGEAPA.

An S-(dipyrrolylmethanemethyl)cysteine modification is found at C242.

It belongs to the HMBS family. In terms of assembly, monomer. Dipyrromethane is required as a cofactor.

It catalyses the reaction 4 porphobilinogen + H2O = hydroxymethylbilane + 4 NH4(+). The protein operates within porphyrin-containing compound metabolism; protoporphyrin-IX biosynthesis; coproporphyrinogen-III from 5-aminolevulinate: step 2/4. Tetrapolymerization of the monopyrrole PBG into the hydroxymethylbilane pre-uroporphyrinogen in several discrete steps. This Salmonella arizonae (strain ATCC BAA-731 / CDC346-86 / RSK2980) protein is Porphobilinogen deaminase.